An 874-amino-acid polypeptide reads, in one-letter code: GRB2-associated and regulator of MAPK protein 2 (874 aa).

The segment at 12–339 is CABIT; it reads RWSMGAFPLD…LLAGDPRVER (328 aa). The span at 188–206 shows a compositional bias: gly residues; that stretch reads GGGGPASAGAAGGTGGGGA. 5 disordered regions span residues 188 to 207, 388 to 422, 437 to 545, 563 to 598, and 625 to 742; these read GGGG…GGAR, PGLA…EPAA, GPEG…SPSP, GESS…AASL, and APFG…PSKA. Composition is skewed to low complexity over residues 388–403 and 518–545; these read PGLA…APAG and SPSS…SPSP. Residues 575–585 are compositionally biased toward polar residues; that stretch reads PSTTQPSQASR. Composition is skewed to low complexity over residues 632 to 650 and 658 to 691; these read PFSG…SSGP and ATSG…SSSS. S735 carries the phosphoserine modification. In terms of domain architecture, SAM spans 807-871; sequence SALSLEEVSR…KIMQFIKGWR (65 aa).

This sequence belongs to the GAREM family.

Its function is as follows. Probable adapter protein that may provide a link between cell surface epidermal growth factor receptor and the MAPK/ERK signaling pathway. The protein is GRB2-associated and regulator of MAPK protein 2 (GAREM2) of Homo sapiens (Human).